Consider the following 233-residue polypeptide: LexA repressor (233 aa).

A DNA-binding region (H-T-H motif) is located at residues 26–46 (FDEMKEALDLRSKSGIHRLIT). Catalysis depends on for autocatalytic cleavage activity residues serine 154 and lysine 192.

The protein belongs to the peptidase S24 family. As to quaternary structure, homodimer.

It carries out the reaction Hydrolysis of Ala-|-Gly bond in repressor LexA.. Its function is as follows. Represses a number of genes involved in the response to DNA damage (SOS response), including recA and lexA. In the presence of single-stranded DNA, RecA interacts with LexA causing an autocatalytic cleavage which disrupts the DNA-binding part of LexA, leading to derepression of the SOS regulon and eventually DNA repair. In Roseobacter denitrificans (strain ATCC 33942 / OCh 114) (Erythrobacter sp. (strain OCh 114)), this protein is LexA repressor.